Reading from the N-terminus, the 249-residue chain is 2,3-bisphosphoglycerate-dependent phosphoglycerate mutase (249 aa).

Substrate-binding positions include 9-16 (RHGESEWN), 22-23 (TG), Arg61, 88-91 (ERHY), Lys99, 115-116 (RR), and 184-185 (GN). The active-site Tele-phosphohistidine intermediate is the His10. Residue Glu88 is the Proton donor/acceptor of the active site.

Belongs to the phosphoglycerate mutase family. BPG-dependent PGAM subfamily.

It catalyses the reaction (2R)-2-phosphoglycerate = (2R)-3-phosphoglycerate. It functions in the pathway carbohydrate degradation; glycolysis; pyruvate from D-glyceraldehyde 3-phosphate: step 3/5. Functionally, catalyzes the interconversion of 2-phosphoglycerate and 3-phosphoglycerate. This chain is 2,3-bisphosphoglycerate-dependent phosphoglycerate mutase, found in Cutibacterium acnes (strain DSM 16379 / KPA171202) (Propionibacterium acnes).